A 75-amino-acid chain; its full sequence is Rugosin-LK1 (75 aa).

The signal sequence occupies residues 1–22 (MFTMKKSLLFLFFLGTISLSFC). A propeptide spanning residues 23–40 (EEERSADEDDEGEMTEEE) is cleaved from the precursor.

As to expression, expressed by the skin glands.

It is found in the secreted. Its function is as follows. Has antimicrobial activity against Gram-positive bacteria S.aureus ATCC 2592 (MIC=10.0 uM), S.aureus ATCC 43300 (MIC=15.0 uM) and B.subtilis (MIC=40.0 uM), against Gram-negative bacteria E.coli ML-35P (MIC=10.0 uM), P.aeruginosa PA01 (MIC=5.0 uM) and P.aeruginosa ATCC 27853 (MIC=5.0 uM) and against fungus C.albicans ATCC 2002 (MIC=10.0 uM). The chain is Rugosin-LK1 from Limnonectes kuhlii (Kuhl's Creek frog).